We begin with the raw amino-acid sequence, 120 residues long: Holo-[acyl-carrier-protein] synthase (120 aa).

Mg(2+)-binding residues include Asp-8 and Glu-60.

This sequence belongs to the P-Pant transferase superfamily. AcpS family. Mg(2+) is required as a cofactor.

The protein localises to the cytoplasm. It catalyses the reaction apo-[ACP] + CoA = holo-[ACP] + adenosine 3',5'-bisphosphate + H(+). Its function is as follows. Transfers the 4'-phosphopantetheine moiety from coenzyme A to a Ser of acyl-carrier-protein. This is Holo-[acyl-carrier-protein] synthase from Anaplasma marginale (strain St. Maries).